Here is a 193-residue protein sequence, read N- to C-terminus: Holliday junction branch migration complex subunit RuvA (193 aa).

The interval 1–64 is domain I; sequence MIGRIAGVLL…EDAHLLYGFG (64 aa). The interval 65-139 is domain II; the sequence is TAEERSTFRE…GKIGADLGAM (75 aa). Residues 139-143 are flexible linker; sequence MAGAA. The domain III stretch occupies residues 144–193; it reads SASDHASDILNALLALGYSEKEALTAVKNVPAGTGVSEGIKLALKALSKG.

It belongs to the RuvA family. As to quaternary structure, homotetramer. Forms an RuvA(8)-RuvB(12)-Holliday junction (HJ) complex. HJ DNA is sandwiched between 2 RuvA tetramers; dsDNA enters through RuvA and exits via RuvB. An RuvB hexamer assembles on each DNA strand where it exits the tetramer. Each RuvB hexamer is contacted by two RuvA subunits (via domain III) on 2 adjacent RuvB subunits; this complex drives branch migration. In the full resolvosome a probable DNA-RuvA(4)-RuvB(12)-RuvC(2) complex forms which resolves the HJ.

It is found in the cytoplasm. Functionally, the RuvA-RuvB-RuvC complex processes Holliday junction (HJ) DNA during genetic recombination and DNA repair, while the RuvA-RuvB complex plays an important role in the rescue of blocked DNA replication forks via replication fork reversal (RFR). RuvA specifically binds to HJ cruciform DNA, conferring on it an open structure. The RuvB hexamer acts as an ATP-dependent pump, pulling dsDNA into and through the RuvAB complex. HJ branch migration allows RuvC to scan DNA until it finds its consensus sequence, where it cleaves and resolves the cruciform DNA. The polypeptide is Holliday junction branch migration complex subunit RuvA (Paraburkholderia phytofirmans (strain DSM 17436 / LMG 22146 / PsJN) (Burkholderia phytofirmans)).